Reading from the N-terminus, the 121-residue chain is Protein p14.5 (121 aa).

Alanine 2 carries the N-acetylalanine; by host modification. The tract at residues serine 84–lysine 121 is disordered. Positions lysine 104–lysine 121 are enriched in basic residues.

The protein belongs to the asfivirus structural protein p14.5 family. In terms of assembly, interacts with the major capsid protein. Interacts with host IRF3; this interaction interferes with the recruitment of IRF3 to TBK1. Post-translationally, acetylated.

Its subcellular location is the virion. Structural protein required for transport of intracellular particles from the assembly sites to the plasma membrane. Binds to both ssDNA and dsDNA. Suppressed the activation of the cGAS/STING pathway by interfering with the recruitment of IRF3 to TBK1, which in turn suppresses IRF3 phosphorylation, decreasing interferon production. The chain is Protein p14.5 from African swine fever virus (isolate Pig/Kenya/KEN-50/1950) (ASFV).